A 123-amino-acid chain; its full sequence is NADH-quinone oxidoreductase subunit A (123 aa).

The next 3 membrane-spanning stretches (helical) occupy residues 11-31, 68-88, and 93-113; these read YLPI…IMML, LVAI…PWAI, and IGKI…IGFI.

It belongs to the complex I subunit 3 family. NDH-1 is composed of 14 different subunits. Subunits NuoA, H, J, K, L, M, N constitute the membrane sector of the complex.

It is found in the cell inner membrane. It catalyses the reaction a quinone + NADH + 5 H(+)(in) = a quinol + NAD(+) + 4 H(+)(out). NDH-1 shuttles electrons from NADH, via FMN and iron-sulfur (Fe-S) centers, to quinones in the respiratory chain. The immediate electron acceptor for the enzyme in this species is believed to be ubiquinone. Couples the redox reaction to proton translocation (for every two electrons transferred, four hydrogen ions are translocated across the cytoplasmic membrane), and thus conserves the redox energy in a proton gradient. The chain is NADH-quinone oxidoreductase subunit A from Rickettsia typhi (strain ATCC VR-144 / Wilmington).